The chain runs to 211 residues: ATP phosphoribosyltransferase (211 aa).

Belongs to the ATP phosphoribosyltransferase family. Short subfamily. In terms of assembly, heteromultimer composed of HisG and HisZ subunits.

Its subcellular location is the cytoplasm. It carries out the reaction 1-(5-phospho-beta-D-ribosyl)-ATP + diphosphate = 5-phospho-alpha-D-ribose 1-diphosphate + ATP. It functions in the pathway amino-acid biosynthesis; L-histidine biosynthesis; L-histidine from 5-phospho-alpha-D-ribose 1-diphosphate: step 1/9. Catalyzes the condensation of ATP and 5-phosphoribose 1-diphosphate to form N'-(5'-phosphoribosyl)-ATP (PR-ATP). Has a crucial role in the pathway because the rate of histidine biosynthesis seems to be controlled primarily by regulation of HisG enzymatic activity. In Pseudomonas fluorescens (strain SBW25), this protein is ATP phosphoribosyltransferase.